The chain runs to 582 residues: Proline--tRNA ligase (582 aa).

The protein belongs to the class-II aminoacyl-tRNA synthetase family. ProS type 1 subfamily. In terms of assembly, homodimer.

Its subcellular location is the cytoplasm. It catalyses the reaction tRNA(Pro) + L-proline + ATP = L-prolyl-tRNA(Pro) + AMP + diphosphate. In terms of biological role, catalyzes the attachment of proline to tRNA(Pro) in a two-step reaction: proline is first activated by ATP to form Pro-AMP and then transferred to the acceptor end of tRNA(Pro). As ProRS can inadvertently accommodate and process non-cognate amino acids such as alanine and cysteine, to avoid such errors it has two additional distinct editing activities against alanine. One activity is designated as 'pretransfer' editing and involves the tRNA(Pro)-independent hydrolysis of activated Ala-AMP. The other activity is designated 'posttransfer' editing and involves deacylation of mischarged Ala-tRNA(Pro). The misacylated Cys-tRNA(Pro) is not edited by ProRS. This is Proline--tRNA ligase from Mycolicibacterium paratuberculosis (strain ATCC BAA-968 / K-10) (Mycobacterium paratuberculosis).